The primary structure comprises 337 residues: MVREKVTVSTRTLQWKCVESRTDSKRLYYGRFILSPLMKGQADTIGIAMRRALLGEIEGTCITRVKSEKVPHEYSTITGIQESVHEILMNLKEIILRSNLYGTSDASICVKGPGSVTAQDIILPPYVEIVDNTQHIASLTEPIDFCIGLQIERNRGYLIKTPHNFQDGSYPIDAVFMPVRNANHSIHSYGNGNEKQEILFLEIWTNGSLTPKEALHEASRNLIDLFIPFLHMEEDNLYLQDNQHTVPLSPFTFHDKLAKLIKNKKKIALKSIFIDQSELPSRIYNCLKMSNIYTLLDLLNNSQEDLMKIEHFRSEDVKRILGILEKYFVIDLAKNKF.

The alpha N-terminal domain (alpha-NTD) stretch occupies residues 1 to 233; it reads MVREKVTVST…DLFIPFLHME (233 aa). The interval 265–337 is alpha C-terminal domain (alpha-CTD); it reads KKIALKSIFI…FVIDLAKNKF (73 aa).

The protein belongs to the RNA polymerase alpha chain family. In terms of assembly, in plastids the minimal PEP RNA polymerase catalytic core is composed of four subunits: alpha, beta, beta', and beta''. When a (nuclear-encoded) sigma factor is associated with the core the holoenzyme is formed, which can initiate transcription.

It is found in the plastid. The protein localises to the chloroplast. It carries out the reaction RNA(n) + a ribonucleoside 5'-triphosphate = RNA(n+1) + diphosphate. Its function is as follows. DNA-dependent RNA polymerase catalyzes the transcription of DNA into RNA using the four ribonucleoside triphosphates as substrates. This Nicotiana sylvestris (Wood tobacco) protein is DNA-directed RNA polymerase subunit alpha.